Here is a 101-residue protein sequence, read N- to C-terminus: Small ribosomal subunit protein uS14 (101 aa).

It belongs to the universal ribosomal protein uS14 family. In terms of assembly, part of the 30S ribosomal subunit. Contacts proteins S3 and S10.

Its function is as follows. Binds 16S rRNA, required for the assembly of 30S particles and may also be responsible for determining the conformation of the 16S rRNA at the A site. The polypeptide is Small ribosomal subunit protein uS14 (Acinetobacter baumannii (strain AB307-0294)).